Consider the following 251-residue polypeptide: MNGMSTGTLVLLRHGESEWNALNLFTGWVDVHLTDKGIAEGKRAGELLLEHNLLPDVLYTSLLRRAISTANIALDTADRHWIPVIRDWRLNERHYGALQGRNKAQVKEKYGDEQFMLWRRSYDTPPPPIEAGSEYSQDTDPRYANLDKVPLTECLKDVVVRLIPYWEDTISADLKAGKTVLITAHGNSLRALVKHLDGISDEDIAGLNIPTGIPLRYDLDENLKPLNPGGTYLDPEAAAAGAAAVANQGGK.

Residues 13–20 (RHGESEWN), 26–27 (TG), arginine 65, 92–95 (ERHY), lysine 103, 119–120 (RR), and 186–187 (GN) each bind substrate. The active-site Tele-phosphohistidine intermediate is the histidine 14. Glutamate 92 functions as the Proton donor/acceptor in the catalytic mechanism.

Belongs to the phosphoglycerate mutase family. BPG-dependent PGAM subfamily.

The enzyme catalyses (2R)-2-phosphoglycerate = (2R)-3-phosphoglycerate. It participates in carbohydrate degradation; glycolysis; pyruvate from D-glyceraldehyde 3-phosphate: step 3/5. Functionally, catalyzes the interconversion of 2-phosphoglycerate and 3-phosphoglycerate. The polypeptide is 2,3-bisphosphoglycerate-dependent phosphoglycerate mutase (Rhodococcus jostii (strain RHA1)).